Reading from the N-terminus, the 270-residue chain is Probable thioesterase BOA10 (270 aa).

Belongs to the AMT4 thioesterase family.

Its pathway is polyketide biosynthesis. In terms of biological role, probable thioesterase; part of the gene cluster B that mediates the biosynthesis of botcinic acid and its botcinin derivatives, acetate-derived polyketides that contribute to virulence when combined with the sesquiterpene botrydial. Botcinic acid and its derivatives have been shown to induce chlorosis and necrosis during host plant infection, but also have antifungal activities. Two polyketide synthases, BOA6 and BOA9, are involved in the biosynthesis of botcinins. BOA6 mediates the formation of the per-methylated tetraketide core by condensation of four units of malonyl-CoA with one unit of acetyl-CoA, which would be methylated in activated methylene groups to yield a bicyclic acid intermediate that could then either be converted to botrylactone derivatives or lose the starter acetate unit through a retro-Claisen type C-C bond cleavage to yield botcinin derivatives. The second polyketide synthase, BOA9, is probably required for the biosynthesis of the tetraketide side chain of botcinins. The methyltransferase (MT) domain within BOA6 is probably responsible for the incorporation of four methyl groups. The trans-enoyl reductase BOA5 might take over the enoyl reductase function of BOA6 that misses an ER domain. The monooxygenases BOA2, BOA3 and BOA4 might be involved in further hydroxylations at C4, C5 and C8, whereas BOA7, close to BOA9, could potentially be involved in the hydroxylation at C4 in the side chain of botcinins. The chain is Probable thioesterase BOA10 from Botryotinia fuckeliana (strain B05.10) (Noble rot fungus).